The chain runs to 509 residues: MELSPRAAELTSLLESRISNFYTNFQVDEIGRVVSVGDGIARVYGLNEIQAGEMVEFASGVKGIALNLENENVGIVVFGSDTAIKEGDLVKRTGSIVDVPAGKAMLGRVVDGLGVPIDGRGALSDHERRRVEVKAPGIIERKSVHEPMQTGLKAVDSLVPIGRGQRELIIGDRQTGKTAIAIDTILNQKQLNSRATSESETLYCVYVAIGQKRSTVAQLVQILSEANALEYSILVAATASDPAPLQFLAPYSGCAMGEYFRDNGMHALIIYDDLSKQAVAYRQMSLLLRRPPGREAFPGDVFYLHSRLLERAAKRSDQTGAGSLTALPVIETQAGDVSAYIPTNVIPITDGQICLETELFYRGIRPAINVGLSVSRVGSAAQLKTMKQVCGSSKLELAQYREVAALAQFGSDLDAATQALLNRGARLTEVPKQPQYAPLPIEKQILVIYAAVNGFCDRMPLDRISQYERAIPNSVKPELLQSFLEKGGLTNERKMEPDTFLKESALAFI.

171–178 (GDRQTGKT) is a binding site for ATP.

The protein belongs to the ATPase alpha/beta chains family. As to quaternary structure, F-type ATPases have 2 components, CF(1) - the catalytic core - and CF(0) - the membrane proton channel. CF(1) has five subunits: alpha(3), beta(3), gamma(1), delta(1), epsilon(1). CF(0) has three main subunits: a, b and c.

It localises to the mitochondrion. It is found in the mitochondrion inner membrane. In terms of biological role, mitochondrial membrane ATP synthase (F(1)F(0) ATP synthase or Complex V) produces ATP from ADP in the presence of a proton gradient across the membrane which is generated by electron transport complexes of the respiratory chain. F-type ATPases consist of two structural domains, F(1) - containing the extramembraneous catalytic core, and F(0) - containing the membrane proton channel, linked together by a central stalk and a peripheral stalk. During catalysis, ATP synthesis in the catalytic domain of F(1) is coupled via a rotary mechanism of the central stalk subunits to proton translocation. Subunits alpha and beta form the catalytic core in F(1). Rotation of the central stalk against the surrounding alpha(3)beta(3) subunits leads to hydrolysis of ATP in three separate catalytic sites on the beta subunits. Subunit alpha does not bear the catalytic high-affinity ATP-binding sites. The chain is ATP synthase subunit alpha, mitochondrial (ATPA) from Nicotiana plumbaginifolia (Leadwort-leaved tobacco).